Here is a 411-residue protein sequence, read N- to C-terminus: uncharacterized protein (411 aa).

This sequence in the C-terminal section; belongs to the PAPS reductase family.

This is an uncharacterized protein from Methanocaldococcus jannaschii (strain ATCC 43067 / DSM 2661 / JAL-1 / JCM 10045 / NBRC 100440) (Methanococcus jannaschii).